The primary structure comprises 202 residues: MKPLTVRQREILDCIRRSVENEGFPPTIAEIARAIGVSSPHGVREQLRALERKGVIELIPSASRGIRLLARAEEPGLPLIGKVAAGRPLLTEAQVERYCQLGPELFEHKGDYLLRVQGMSMRDAGIIDGDLLVVQQAQEARSGQIVVVRLHDEVTVKRLRLEGALAYLEPANPEFSVIAVDPERQPLCIEGIVVGVIRTRVG.

Positions 28–48 (IAEIARAIGVSSPHGVREQLR) form a DNA-binding region, H-T-H motif. Active-site for autocatalytic cleavage activity residues include serine 120 and lysine 157.

Belongs to the peptidase S24 family. In terms of assembly, homodimer.

The catalysed reaction is Hydrolysis of Ala-|-Gly bond in repressor LexA.. Functionally, represses a number of genes involved in the response to DNA damage (SOS response), including recA and lexA. In the presence of single-stranded DNA, RecA interacts with LexA causing an autocatalytic cleavage which disrupts the DNA-binding part of LexA, leading to derepression of the SOS regulon and eventually DNA repair. This is LexA repressor from Methylococcus capsulatus (strain ATCC 33009 / NCIMB 11132 / Bath).